Reading from the N-terminus, the 256-residue chain is Acetoacetate decarboxylase 3 (256 aa).

Lys110 acts as the Schiff-base intermediate with acetoacetate in catalysis.

It belongs to the ADC family.

It carries out the reaction acetoacetate + H(+) = acetone + CO2. Catalyzes the conversion of acetoacetate to acetone and carbon dioxide. This Mesorhizobium japonicum (strain LMG 29417 / CECT 9101 / MAFF 303099) (Mesorhizobium loti (strain MAFF 303099)) protein is Acetoacetate decarboxylase 3.